Reading from the N-terminus, the 375-residue chain is Coproporphyrin III ferrochelatase (375 aa).

Ser-59 and Tyr-128 together coordinate Fe-coproporphyrin III. Fe(2+)-binding residues include His-191 and Glu-286.

This sequence belongs to the ferrochelatase family.

It is found in the cytoplasm. The catalysed reaction is Fe-coproporphyrin III + 2 H(+) = coproporphyrin III + Fe(2+). It participates in porphyrin-containing compound metabolism; protoheme biosynthesis. In terms of biological role, involved in coproporphyrin-dependent heme b biosynthesis. Catalyzes the insertion of ferrous iron into coproporphyrin III to form Fe-coproporphyrin III. The protein is Coproporphyrin III ferrochelatase of Streptomyces griseus subsp. griseus (strain JCM 4626 / CBS 651.72 / NBRC 13350 / KCC S-0626 / ISP 5235).